Consider the following 314-residue polypeptide: Inositol oxygenase 5 (314 aa).

Substrate contacts are provided by residues Arg54 and Asp112–Ser114. Positions 125, 150, and 151 each coordinate Fe cation. Residues Lys154 and Gly171 to Asp172 each bind substrate. Positions 223, 249, and 282 each coordinate Fe cation. His249 to Ser250 provides a ligand contact to substrate.

Belongs to the myo-inositol oxygenase family. It depends on Fe cation as a cofactor. As to expression, expressed in flowers and siliques.

Its subcellular location is the cytoplasm. The enzyme catalyses myo-inositol + O2 = D-glucuronate + H2O + H(+). The protein operates within polyol metabolism; myo-inositol degradation into D-glucuronate; D-glucuronate from myo-inositol: step 1/1. In terms of biological role, involved in the biosynthesis of UDP-glucuronic acid (UDP-GlcA), providing nucleotide sugars for cell-wall polymers. May be also involved in plant ascorbate biosynthesis. This chain is Inositol oxygenase 5 (MIOX5), found in Arabidopsis thaliana (Mouse-ear cress).